The primary structure comprises 838 residues: Rho GTPase-activating protein 12 (838 aa).

Residues 10–72 (AGQAYIEVEY…PAQYVKEVTR (63 aa)) form the SH3 domain. 2 stretches are compositionally biased toward polar residues: residues 155–172 (GKFN…QNRT) and 189–198 (TSFSQEQSCD). The tract at residues 155 to 239 (GKFNSDSHSP…PPNQGRPDSP (85 aa)) is disordered. Serine 163 is subject to Phosphoserine. Phosphoserine occurs at positions 199, 211, and 213. Residues threonine 228 and threonine 229 each carry the phosphothreonine modification. Serine 238 bears the Phosphoserine mark. Position 241 is a phosphotyrosine (tyrosine 241). A WW 1 domain is found at 263–296 (IQVNGEWETHKDSSGRCYYYNRTTQERTWKPPRW). The segment covering 291-302 (WKPPRWARDVST) has biased composition (basic and acidic residues). The disordered stretch occupies residues 291-346 (WKPPRWARDVSTSRDFQSPGEQEPLSSEENYHSSCFSQSDSQCGSPPRGWSEELDE). Residues 303-334 (SRDFQSPGEQEPLSSEENYHSSCFSQSDSQCG) are compositionally biased toward polar residues. Positions 355–388 (DYTKEKWLKHVDDQGRQYYYSADGSRSEWELPKY) constitute a WW 2 domain. Positions 425–456 (DSNDKDSPTTTKLCLPENESPPTSSKHQDPGQ) are disordered. In terms of domain architecture, PH spans 466–567 (KITENGKKVR…WFKVLSSTIN (102 aa)). Acidic residues predominate over residues 572 to 582 (EADEAAEEETP). Residues 572–620 (EADEAAEEETPDSPGVEKHDKEKDQKELKKLRSMKGSSMDSSEQKKTKK) are disordered. Phosphoserine is present on serine 584. Positions 586–601 (GVEKHDKEKDQKELKK) are enriched in basic and acidic residues. One can recognise a Rho-GAP domain in the interval 648 to 836 (SNLANLCQRE…LILLELSTVF (189 aa)).

Functionally, GTPase activator for the Rho-type GTPases by converting them to an inactive GDP-bound state. The protein is Rho GTPase-activating protein 12 (Arhgap12) of Mus musculus (Mouse).